Consider the following 334-residue polypeptide: Malate dehydrogenase, mitochondrial (334 aa).

A mitochondrion-targeting transit peptide spans 1–17 (MLSRVAKRAFSSTVANP). Residues 24 to 30 (GAGGGIG) and Asp50 contribute to the NAD(+) site. Positions 99 and 105 each coordinate substrate. NAD(+) is bound by residues Asn112 and 135–137 (ISN). Substrate-binding residues include Asn137 and Arg171. Ser177 carries the phosphoserine modification. Catalysis depends on His195, which acts as the Proton acceptor. At Thr199 the chain carries Phosphothreonine. Met245 contacts NAD(+).

The protein belongs to the LDH/MDH superfamily. MDH type 1 family. Homodimer.

It localises to the mitochondrion matrix. The catalysed reaction is (S)-malate + NAD(+) = oxaloacetate + NADH + H(+). The protein is Malate dehydrogenase, mitochondrial (MDH1) of Saccharomyces cerevisiae (strain ATCC 204508 / S288c) (Baker's yeast).